Here is a 116-residue protein sequence, read N- to C-terminus: Putative membrane protein (116 aa).

The chain crosses the membrane as a helical span at residues 13–33 (VISIITFILVIAIFVIEIVSC).

It is found in the host membrane. This is Putative membrane protein from Alethinophid 1 reptarenavirus (isolate AlRrV1/Boa/USA/BC/2009) (Golden Gate virus).